The primary structure comprises 70 residues: Conotoxin AbVIC (70 aa).

Positions 1 to 17 (VLIIAVLFLTACQLTTA) are cleaved as a signal peptide. A propeptide spanning residues 18–41 (ETSSRGKQKHRALRSTDKNSKLTR) is cleaved from the precursor. The interval 19-41 (TSSRGKQKHRALRSTDKNSKLTR) is disordered. Disulfide bonds link C43–C57, C50–C61, and C56–C68.

Belongs to the conotoxin O1 superfamily. As to expression, expressed by the venom duct.

The protein resides in the secreted. This Conus abbreviatus (Abbreviated cone) protein is Conotoxin AbVIC.